The chain runs to 385 residues: 1-deoxy-D-xylulose 5-phosphate reductoisomerase (385 aa).

Residues T10, G11, S12, I13, G36, N38, and N121 each contribute to the NADPH site. K122 contacts 1-deoxy-D-xylulose 5-phosphate. E123 contributes to the NADPH binding site. Residue D147 participates in Mn(2+) binding. 1-deoxy-D-xylulose 5-phosphate-binding residues include S148, E149, S173, and H196. E149 lines the Mn(2+) pocket. Residue G202 participates in NADPH binding. 1-deoxy-D-xylulose 5-phosphate contacts are provided by S209, N214, K215, and E218. E218 is a Mn(2+) binding site.

This sequence belongs to the DXR family. It depends on Mg(2+) as a cofactor. The cofactor is Mn(2+).

It carries out the reaction 2-C-methyl-D-erythritol 4-phosphate + NADP(+) = 1-deoxy-D-xylulose 5-phosphate + NADPH + H(+). Its pathway is isoprenoid biosynthesis; isopentenyl diphosphate biosynthesis via DXP pathway; isopentenyl diphosphate from 1-deoxy-D-xylulose 5-phosphate: step 1/6. Catalyzes the NADPH-dependent rearrangement and reduction of 1-deoxy-D-xylulose-5-phosphate (DXP) to 2-C-methyl-D-erythritol 4-phosphate (MEP). The protein is 1-deoxy-D-xylulose 5-phosphate reductoisomerase of Exiguobacterium sp. (strain ATCC BAA-1283 / AT1b).